The primary structure comprises 303 residues: Zinc transporter ZIP9-A (303 aa).

A helical transmembrane segment spans residues 7–27 (ISLLSLAMLVGCYVSGIIPLA). Asn29 is a glycosylation site (N-linked (GlcNAc...) asparagine). 5 helical membrane-spanning segments follow: residues 35 to 55 (LKLV…AVII), 102 to 122 (AYIG…DQIG), 142 to 162 (ITTT…LGAA), 172 to 192 (LIVF…LVSF), and 206 to 226 (HLLV…LGLS). Asn237 carries an N-linked (GlcNAc...) asparagine glycan. 2 helical membrane passes run 240 to 260 (GVAM…HVLP) and 282 to 302 (LEVC…IGHQ).

It belongs to the ZIP transporter (TC 2.A.5) family.

The protein localises to the golgi apparatus. Its subcellular location is the trans-Golgi network membrane. It is found in the cell membrane. It localises to the cytoplasm. The protein resides in the perinuclear region. The protein localises to the mitochondrion. Its subcellular location is the nucleus. It carries out the reaction Zn(2+)(in) = Zn(2+)(out). Functionally, transports zinc ions across cell and organelle membranes into the cytoplasm and regulates intracellular zinc homeostasis. Participates in the zinc ions efflux out of the secretory compartments. Regulates intracellular zinc level, resulting in the enhancement of AKT1 and MAPK3/MAPK1 (Erk1/2) phosphorylation in response to the BCR activation. Also functions as a membrane androgen receptor that mediates, through a G protein, the non-classical androgen signaling pathway, characterized by the activation of MAPK3/MAPK1 (Erk1/2) and transcription factors CREB1 or ATF1. Moreover, has dual functions as a membrane-bound androgen receptor and as an androgen-dependent zinc transporter both of which are mediated through an inhibitory G protein (Gi) that mediates both MAP kinase and zinc signaling leading to the androgen-dependent apoptotic process. This chain is Zinc transporter ZIP9-A (slc39a9-a), found in Xenopus laevis (African clawed frog).